The following is a 275-amino-acid chain: Thiazole synthase (275 aa).

The Schiff-base intermediate with DXP role is filled by lysine 108. Residues glycine 169, alanine 196–glycine 197, and asparagine 218–threonine 219 contribute to the 1-deoxy-D-xylulose 5-phosphate site.

It belongs to the ThiG family. As to quaternary structure, homotetramer. Forms heterodimers with either ThiH or ThiS.

The protein resides in the cytoplasm. It catalyses the reaction [ThiS sulfur-carrier protein]-C-terminal-Gly-aminoethanethioate + 2-iminoacetate + 1-deoxy-D-xylulose 5-phosphate = [ThiS sulfur-carrier protein]-C-terminal Gly-Gly + 2-[(2R,5Z)-2-carboxy-4-methylthiazol-5(2H)-ylidene]ethyl phosphate + 2 H2O + H(+). It functions in the pathway cofactor biosynthesis; thiamine diphosphate biosynthesis. Functionally, catalyzes the rearrangement of 1-deoxy-D-xylulose 5-phosphate (DXP) to produce the thiazole phosphate moiety of thiamine. Sulfur is provided by the thiocarboxylate moiety of the carrier protein ThiS. In vitro, sulfur can be provided by H(2)S. This chain is Thiazole synthase, found in Ralstonia pickettii (strain 12J).